A 367-amino-acid polypeptide reads, in one-letter code: Probable dual-specificity RNA methyltransferase RlmN (367 aa).

The active-site Proton acceptor is the Glu92. One can recognise a Radical SAM core domain in the interval 98-326; that stretch reads QEYGLSVCVT…YDTLKKNGIN (229 aa). Cys105 and Cys341 are disulfide-bonded. [4Fe-4S] cluster is bound by residues Cys112, Cys116, and Cys119. Residues 164 to 165, Ser196, 219 to 221, and Asn297 contribute to the S-adenosyl-L-methionine site; these read GE and SLH. Catalysis depends on Cys341, which acts as the S-methylcysteine intermediate.

It belongs to the radical SAM superfamily. RlmN family. The cofactor is [4Fe-4S] cluster.

The protein resides in the cytoplasm. It catalyses the reaction adenosine(2503) in 23S rRNA + 2 reduced [2Fe-2S]-[ferredoxin] + 2 S-adenosyl-L-methionine = 2-methyladenosine(2503) in 23S rRNA + 5'-deoxyadenosine + L-methionine + 2 oxidized [2Fe-2S]-[ferredoxin] + S-adenosyl-L-homocysteine. The catalysed reaction is adenosine(37) in tRNA + 2 reduced [2Fe-2S]-[ferredoxin] + 2 S-adenosyl-L-methionine = 2-methyladenosine(37) in tRNA + 5'-deoxyadenosine + L-methionine + 2 oxidized [2Fe-2S]-[ferredoxin] + S-adenosyl-L-homocysteine. Its function is as follows. Specifically methylates position 2 of adenine 2503 in 23S rRNA and position 2 of adenine 37 in tRNAs. In Listeria monocytogenes serovar 1/2a (strain ATCC BAA-679 / EGD-e), this protein is Probable dual-specificity RNA methyltransferase RlmN.